Consider the following 121-residue polypeptide: Small ribosomal subunit protein uS13 (121 aa).

The segment at 91-121 (HRKGLPVRGQRTRTNARTRKGKKKTVAGKKK) is disordered.

Belongs to the universal ribosomal protein uS13 family. In terms of assembly, part of the 30S ribosomal subunit. Forms a loose heterodimer with protein S19. Forms two bridges to the 50S subunit in the 70S ribosome.

Located at the top of the head of the 30S subunit, it contacts several helices of the 16S rRNA. In the 70S ribosome it contacts the 23S rRNA (bridge B1a) and protein L5 of the 50S subunit (bridge B1b), connecting the 2 subunits; these bridges are implicated in subunit movement. Contacts the tRNAs in the A and P-sites. The polypeptide is Small ribosomal subunit protein uS13 (Treponema denticola (strain ATCC 35405 / DSM 14222 / CIP 103919 / JCM 8153 / KCTC 15104)).